We begin with the raw amino-acid sequence, 445 residues long: MREIVSCQAGQCGNQIGSKFWEVIADEHGVDPTGSYQGDSDLQLERINVYFDESAGGRYVPRAVLMDLEPGTMDSVRAGPYGQLFRPDNFIFGQSGAGNNWAKGHYTEGAELIDSVLDVCRKEAESCDCLQGFQLSHSLGGGTGSGMGTLLISKLREEYPDRIMMTFSVIPSPRVSDTVVEPYNTTLSVHQLVENSDESMCIDNEALYDICFRTLKLTTPTFGDLNHLVAAVMSGVTCCLRFPGQLNSDLRNRLAVNLVPFPRLHFFMMGFAPLTSRGSQEYRQGLSVADVTQQMFDAKNMMQAADPRHGRYLTASALFRGRMSTKEVDEQMLNVQNKNSSYFIEWIPNNIKSSICDIPPKGLKMSVTFIGNNTCIQEMFRRVGEQFTGMFRRKRFLHWYTGEGMDEMEFTEAESNMNDLVSEYQQYQDATVEEEGEFDEEEEAY.

Residues Q11, E69, S138, G142, T143, G144, N204, and N226 each coordinate GTP. Residue E69 participates in Mg(2+) binding.

The protein belongs to the tubulin family. In terms of assembly, dimer of alpha and beta chains. A typical microtubule is a hollow water-filled tube with an outer diameter of 25 nm and an inner diameter of 15 nM. Alpha-beta heterodimers associate head-to-tail to form protofilaments running lengthwise along the microtubule wall with the beta-tubulin subunit facing the microtubule plus end conferring a structural polarity. Microtubules usually have 13 protofilaments but different protofilament numbers can be found in some organisms and specialized cells. Mg(2+) serves as cofactor.

It localises to the cytoplasm. The protein localises to the cytoskeleton. In terms of biological role, tubulin is the major constituent of microtubules, a cylinder consisting of laterally associated linear protofilaments composed of alpha- and beta-tubulin heterodimers. Microtubules grow by the addition of GTP-tubulin dimers to the microtubule end, where a stabilizing cap forms. Below the cap, tubulin dimers are in GDP-bound state, owing to GTPase activity of alpha-tubulin. The sequence is that of Tubulin beta chain from Leishmania mexicana.